We begin with the raw amino-acid sequence, 128 residues long: uncharacterized protein (128 aa).

The S1 motif domain maps to G6–K74. The tract at residues S72–G128 is disordered. Residues D78–R120 show a composition bias toward basic and acidic residues.

The protein belongs to the peptidase U57 family.

This is an uncharacterized protein from Bacillus subtilis (strain 168).